The following is a 287-amino-acid chain: Large ribosomal subunit protein uL2 (287 aa).

Composition is skewed to basic residues over residues 209–220 (GRNRWKARRPKV) and 258–287 (KTRK…GRQS). The interval 209–287 (GRNRWKARRP…SKRSRGGRQS (79 aa)) is disordered.

This sequence belongs to the universal ribosomal protein uL2 family. Part of the 50S ribosomal subunit. Forms a bridge to the 30S subunit in the 70S ribosome.

In terms of biological role, one of the primary rRNA binding proteins. Required for association of the 30S and 50S subunits to form the 70S ribosome, for tRNA binding and peptide bond formation. It has been suggested to have peptidyltransferase activity; this is somewhat controversial. Makes several contacts with the 16S rRNA in the 70S ribosome. This is Large ribosomal subunit protein uL2 from Acaryochloris marina (strain MBIC 11017).